Reading from the N-terminus, the 192-residue chain is Imidazoleglycerol-phosphate dehydratase (192 aa).

It belongs to the imidazoleglycerol-phosphate dehydratase family.

It is found in the cytoplasm. The enzyme catalyses D-erythro-1-(imidazol-4-yl)glycerol 3-phosphate = 3-(imidazol-4-yl)-2-oxopropyl phosphate + H2O. It participates in amino-acid biosynthesis; L-histidine biosynthesis; L-histidine from 5-phospho-alpha-D-ribose 1-diphosphate: step 6/9. In Hydrogenobaculum sp. (strain Y04AAS1), this protein is Imidazoleglycerol-phosphate dehydratase.